Here is a 251-residue protein sequence, read N- to C-terminus: Probable transcriptional regulatory protein MSMEG_2940/MSMEI_2866 (251 aa).

This sequence belongs to the TACO1 family.

Its subcellular location is the cytoplasm. This is Probable transcriptional regulatory protein MSMEG_2940/MSMEI_2866 from Mycolicibacterium smegmatis (strain ATCC 700084 / mc(2)155) (Mycobacterium smegmatis).